Here is a 181-residue protein sequence, read N- to C-terminus: HGPRTase-like protein 2 (181 aa).

The protein belongs to the purine/pyrimidine phosphoribosyltransferase family. Archaeal HPRT subfamily.

Functionally, may catalyze a purine salvage reaction, the substrate is unknown. In Haloferax volcanii (strain ATCC 29605 / DSM 3757 / JCM 8879 / NBRC 14742 / NCIMB 2012 / VKM B-1768 / DS2) (Halobacterium volcanii), this protein is HGPRTase-like protein 2.